Here is a 262-residue protein sequence, read N- to C-terminus: MSRIHPTAIIEPGAQLHETVEVGPYAIVGSHVTIGARTTIGSHSVIEGHTTIGEDNRIGHYASVGGRPQDMKYKDEPTRLVIGDRNTIREFTTIHTGTVQDTGVTTLGDDNWIMAYVHIGHDCRVGSHVILSSNAQMAGHVEIGDWAIVGGMSGVHQFVRIGAHSMLGGASALVQDIPPFVIAAGNKAEPHGINVEGLRRRGFSPDAISALRSAYRILYKNSLSLEEAKVQLSELAQAGGDGDAAVKSLVDFVESSQRGIIR.

It belongs to the transferase hexapeptide repeat family. LpxA subfamily. In terms of assembly, homotrimer.

The protein localises to the cytoplasm. The catalysed reaction is a (3R)-hydroxyacyl-[ACP] + UDP-N-acetyl-alpha-D-glucosamine = a UDP-3-O-[(3R)-3-hydroxyacyl]-N-acetyl-alpha-D-glucosamine + holo-[ACP]. It functions in the pathway glycolipid biosynthesis; lipid IV(A) biosynthesis; lipid IV(A) from (3R)-3-hydroxytetradecanoyl-[acyl-carrier-protein] and UDP-N-acetyl-alpha-D-glucosamine: step 1/6. In terms of biological role, involved in the biosynthesis of lipid A, a phosphorylated glycolipid that anchors the lipopolysaccharide to the outer membrane of the cell. The protein is Acyl-[acyl-carrier-protein]--UDP-N-acetylglucosamine O-acyltransferase of Burkholderia mallei (strain NCTC 10247).